The primary structure comprises 451 residues: tRNA modification GTPase MnmE (451 aa).

The (6S)-5-formyl-5,6,7,8-tetrahydrofolate site is built by Arg28, Glu85, and Lys124. A TrmE-type G domain is found at 220-377 (GMNVVLVGQP…LRSELLRVAG (158 aa)). Asn230 is a K(+) binding site. GTP is bound by residues 230–235 (NVGKSS), 249–255 (TDIAGTT), and 274–277 (DTAG). Ser234 lines the Mg(2+) pocket. Residues Thr249, Ile251, and Thr254 each contribute to the K(+) site. Residue Thr255 participates in Mg(2+) binding. Lys451 lines the (6S)-5-formyl-5,6,7,8-tetrahydrofolate pocket.

It belongs to the TRAFAC class TrmE-Era-EngA-EngB-Septin-like GTPase superfamily. TrmE GTPase family. Homodimer. Heterotetramer of two MnmE and two MnmG subunits. Requires K(+) as cofactor.

It localises to the cytoplasm. In terms of biological role, exhibits a very high intrinsic GTPase hydrolysis rate. Involved in the addition of a carboxymethylaminomethyl (cmnm) group at the wobble position (U34) of certain tRNAs, forming tRNA-cmnm(5)s(2)U34. This Aromatoleum aromaticum (strain DSM 19018 / LMG 30748 / EbN1) (Azoarcus sp. (strain EbN1)) protein is tRNA modification GTPase MnmE.